A 238-amino-acid chain; its full sequence is Endo-chitosanase (238 aa).

The signal sequence occupies residues 1-17 (MRLSEILTVALVTGATA). Asparagine 83 carries N-linked (GlcNAc...) asparagine glycosylation.

Belongs to the glycosyl hydrolase 75 family.

It is found in the secreted. The catalysed reaction is Endohydrolysis of beta-(1-&gt;4)-linkages between D-glucosamine residues in a partly acetylated chitosan.. Chitosanase catalyzing the endo-type cleavage of chitosan, the deacylated form of chitin. Chitosanase may be crucial in the degradation of the deacetylated portion of chitin in the fungal cell wall. Chitoolisaccharides produced by the hydrolysis of partially N-acetylated chitosan are known to have many biological activities, including antibacterial activity, immune-enhancing effects, and elicitor activity. The chitosans with higher degrees of deacetylation were shown to be the better substrates. Chitodimer, chitotrimer, and chitotetramer are the major products but monoacetyl chitodimer, monoacetyl chitotrimer, and monoacetyl chitotetramer are also produced. In Aspergillus fumigatus (Neosartorya fumigata), this protein is Endo-chitosanase (csn).